A 1207-amino-acid chain; its full sequence is Disease resistance protein RPP2B (1207 aa).

Positions 15 to 180 constitute a TIR domain; the sequence is CEFDVFVSFR…EIVKNTFRML (166 aa). Residue Glu-89 is part of the active site. The NB-ARC domain occupies 201-445; the sequence is ELEKLLMFDN…FLDIACFFRS (245 aa). 9 LRR repeats span residues 607–630, 653–676, 677–699, 720–743, 744–767, 769–791, 792–815, 840–862, and 863–886; these read PKELVDLSLRYSHIKQLWEDEKNT, AKNLERLDLEGCTSLDLLGSVKQM, NELIYLNLRDCTSLESLPKGFKI, SESIESLHLEGTAIERVVEHIESL, HSLILLNLKNCEKLKYLPNDLYKL, SLQELVLSGCSALESLPPIKEKM, ECLEILLMDGTSIKQTPEMSCLSN, NSFLSDLYLTNCNIDKLPDKFSS, and LRSLRCLCLSRNNIETLPESIEKL.

The protein belongs to the disease resistance TIR-NB-LRR family.

The enzyme catalyses NAD(+) + H2O = ADP-D-ribose + nicotinamide + H(+). Its function is as follows. Disease resistance protein that cooperates with RPP2A to confer resistance to Hyaloperonospora parasitica isolate Cala2. The protein is Disease resistance protein RPP2B of Arabidopsis thaliana (Mouse-ear cress).